Here is a 91-residue protein sequence, read N- to C-terminus: Acyl carrier protein (91 aa).

The region spanning 4–79 is the Carrier domain; it reads QQILDKVQSI…QAVDYILQHK (76 aa). Position 39 is an O-(pantetheine 4'-phosphoryl)serine (S39).

This sequence belongs to the acyl carrier protein (ACP) family. 4'-phosphopantetheine is transferred from CoA to a specific serine of apo-ACP by AcpS. This modification is essential for activity because fatty acids are bound in thioester linkage to the sulfhydryl of the prosthetic group.

The protein resides in the plastid. It localises to the chloroplast. It functions in the pathway lipid metabolism; fatty acid biosynthesis. In terms of biological role, carrier of the growing fatty acid chain in fatty acid biosynthesis. This Cyanidioschyzon merolae (strain NIES-3377 / 10D) (Unicellular red alga) protein is Acyl carrier protein.